Reading from the N-terminus, the 363-residue chain is Phosphoserine aminotransferase (363 aa).

L-glutamate is bound at residue Arg42. Pyridoxal 5'-phosphate-binding positions include 76–77, Trp101, Thr151, Asp170, and Gln193; that span reads AS. Lys194 carries the post-translational modification N6-(pyridoxal phosphate)lysine. 234-235 provides a ligand contact to pyridoxal 5'-phosphate; that stretch reads NT.

It belongs to the class-V pyridoxal-phosphate-dependent aminotransferase family. SerC subfamily. As to quaternary structure, homodimer. Pyridoxal 5'-phosphate serves as cofactor.

Its subcellular location is the cytoplasm. The enzyme catalyses O-phospho-L-serine + 2-oxoglutarate = 3-phosphooxypyruvate + L-glutamate. It carries out the reaction 4-(phosphooxy)-L-threonine + 2-oxoglutarate = (R)-3-hydroxy-2-oxo-4-phosphooxybutanoate + L-glutamate. The protein operates within amino-acid biosynthesis; L-serine biosynthesis; L-serine from 3-phospho-D-glycerate: step 2/3. In terms of biological role, catalyzes the reversible conversion of 3-phosphohydroxypyruvate to phosphoserine and of 3-hydroxy-2-oxo-4-phosphonooxybutanoate to phosphohydroxythreonine. This Listeria monocytogenes serotype 4b (strain F2365) protein is Phosphoserine aminotransferase.